The primary structure comprises 353 residues: Methylthioribose-1-phosphate isomerase (353 aa).

Catalysis depends on aspartate 241, which acts as the Proton donor.

This sequence belongs to the eIF-2B alpha/beta/delta subunits family. MtnA subfamily.

Its subcellular location is the cytoplasm. The protein localises to the nucleus. It catalyses the reaction 5-(methylsulfanyl)-alpha-D-ribose 1-phosphate = 5-(methylsulfanyl)-D-ribulose 1-phosphate. Its pathway is amino-acid biosynthesis; L-methionine biosynthesis via salvage pathway; L-methionine from S-methyl-5-thio-alpha-D-ribose 1-phosphate: step 1/6. Catalyzes the interconversion of methylthioribose-1-phosphate (MTR-1-P) into methylthioribulose-1-phosphate (MTRu-1-P). This chain is Methylthioribose-1-phosphate isomerase (mri1), found in Danio rerio (Zebrafish).